Reading from the N-terminus, the 262-residue chain is Small ribosomal subunit protein eS1 (262 aa).

This sequence belongs to the eukaryotic ribosomal protein eS1 family. Component of the small ribosomal subunit. Mature ribosomes consist of a small (40S) and a large (60S) subunit. The 40S subunit contains about 32 different proteins and 1 molecule of RNA (18S). The 60S subunit contains about 42 different proteins and 3 molecules of RNA (28S, 5.8S and 5S).

Its subcellular location is the cytoplasm. Component of the ribosome, a large ribonucleoprotein complex responsible for the synthesis of proteins in the cell. The small ribosomal subunit (SSU) binds messenger RNAs (mRNAs) and translates the encoded message by selecting cognate aminoacyl-transfer RNA (tRNA) molecules. The large subunit (LSU) contains the ribosomal catalytic site termed the peptidyl transferase center (PTC), which catalyzes the formation of peptide bonds, thereby polymerizing the amino acids delivered by tRNAs into a polypeptide chain. The nascent polypeptides leave the ribosome through a tunnel in the LSU and interact with protein factors that function in enzymatic processing, targeting, and the membrane insertion of nascent chains at the exit of the ribosomal tunnel. In Plasmodium falciparum (isolate 3D7), this protein is Small ribosomal subunit protein eS1.